We begin with the raw amino-acid sequence, 330 residues long: Glycerol-3-phosphate dehydrogenase [NAD(P)+] (330 aa).

Residues S10, W11, R31, and K105 each coordinate NADPH. K105, G135, and S137 together coordinate sn-glycerol 3-phosphate. Residue A139 participates in NADPH binding. Sn-glycerol 3-phosphate is bound by residues K190, D243, S253, R254, and N255. The Proton acceptor role is filled by K190. Residue R254 coordinates NADPH. Residues V278 and E280 each contribute to the NADPH site.

It belongs to the NAD-dependent glycerol-3-phosphate dehydrogenase family.

It is found in the cytoplasm. The catalysed reaction is sn-glycerol 3-phosphate + NAD(+) = dihydroxyacetone phosphate + NADH + H(+). It catalyses the reaction sn-glycerol 3-phosphate + NADP(+) = dihydroxyacetone phosphate + NADPH + H(+). It functions in the pathway membrane lipid metabolism; glycerophospholipid metabolism. Functionally, catalyzes the reduction of the glycolytic intermediate dihydroxyacetone phosphate (DHAP) to sn-glycerol 3-phosphate (G3P), the key precursor for phospholipid synthesis. This chain is Glycerol-3-phosphate dehydrogenase [NAD(P)+], found in Nitratidesulfovibrio vulgaris (strain ATCC 29579 / DSM 644 / CCUG 34227 / NCIMB 8303 / VKM B-1760 / Hildenborough) (Desulfovibrio vulgaris).